We begin with the raw amino-acid sequence, 261 residues long: MTKPTPTIHSLRDLRRLTPARVGLGRSGASVPTKALLDFTLDHARARDAVHASFDGAALTGELSALGLAVHEVRSRVRGRHDYLVRPDLGRQLDPESRDRLAGIGGPGGDLVLVIGDGLSPGAVHARAAAVVGRLLKRLTEAGIAVGPAVVANGARVALGDEIGALLGARMVAVLIGERPGLSSPASLGAYLTYAPRPGLTDAERNCVSNIHPAGLSEDEAAFKIGWLIREALARRLSGVALKDDSMLEAATAARELSAPG.

Adenosylcob(III)alamin contacts are provided by V157, E178, and C207.

Belongs to the EutC family. As to quaternary structure, the basic unit is a heterodimer which dimerizes to form tetramers. The heterotetramers trimerize; 6 large subunits form a core ring with 6 small subunits projecting outwards. It depends on adenosylcob(III)alamin as a cofactor.

Its subcellular location is the bacterial microcompartment. The catalysed reaction is ethanolamine = acetaldehyde + NH4(+). The protein operates within amine and polyamine degradation; ethanolamine degradation. Catalyzes the deamination of various vicinal amino-alcohols to oxo compounds. Allows this organism to utilize ethanolamine as the sole source of nitrogen and carbon in the presence of external vitamin B12. The chain is Ethanolamine ammonia-lyase small subunit from Rhodopseudomonas palustris (strain BisA53).